Consider the following 158-residue polypeptide: MNVIEGVVATPDARVAIAIARFNHFINDSLLQGAIDALKRIGQVKDENITVVWVPGAYELPLAVRALTKSAKNGGYDAVIALGTVIRGGTAHFEFVAGECSSGLSSVAMDSEIPVAFGVLTTESIEQAIERAGTKAGNKGAEAALTALEMINVLKAIK.

5-amino-6-(D-ribitylamino)uracil contacts are provided by residues Phe-22, 57–59 (AYE), and 84–86 (TVI). Position 89-90 (89-90 (GT)) interacts with (2S)-2-hydroxy-3-oxobutyl phosphate. The active-site Proton donor is His-92. Position 117 (Phe-117) interacts with 5-amino-6-(D-ribitylamino)uracil. Position 131 (Arg-131) interacts with (2S)-2-hydroxy-3-oxobutyl phosphate.

This sequence belongs to the DMRL synthase family. As to quaternary structure, forms an icosahedral capsid composed of 60 subunits, arranged as a dodecamer of pentamers.

The catalysed reaction is (2S)-2-hydroxy-3-oxobutyl phosphate + 5-amino-6-(D-ribitylamino)uracil = 6,7-dimethyl-8-(1-D-ribityl)lumazine + phosphate + 2 H2O + H(+). Its pathway is cofactor biosynthesis; riboflavin biosynthesis; riboflavin from 2-hydroxy-3-oxobutyl phosphate and 5-amino-6-(D-ribitylamino)uracil: step 1/2. In terms of biological role, catalyzes the formation of 6,7-dimethyl-8-ribityllumazine by condensation of 5-amino-6-(D-ribitylamino)uracil with 3,4-dihydroxy-2-butanone 4-phosphate. This is the penultimate step in the biosynthesis of riboflavin. The sequence is that of 6,7-dimethyl-8-ribityllumazine synthase from Pectobacterium atrosepticum (strain SCRI 1043 / ATCC BAA-672) (Erwinia carotovora subsp. atroseptica).